The sequence spans 197 residues: MLERIKDSFTHSIQTKIDASEALPESIAKAAEMMVHCLLGGNKILACGNGGSAGDAQHFSAELLNRFEVERPPLPAIALTTDTSTITAIANDYSYDEIFSKQILALGQPGDILLAISTSGHSGNVIKAIEAALSRDMTIVALTGKDGGPMAGLLSINDVEIRVPSNSTARIQEVHLLAIHCLCDNIDRTLFPQDEQQ.

An SIS domain is found at 34–196 (MVHCLLGGNK…DRTLFPQDEQ (163 aa)). Position 49 to 51 (49 to 51 (NGG)) interacts with substrate. Residues His58 and Glu62 each coordinate Zn(2+). Substrate-binding positions include Glu62, 91-92 (ND), 117-119 (STS), Ser122, and Gln172. Zn(2+) contacts are provided by Gln172 and His180.

This sequence belongs to the SIS family. GmhA subfamily. In terms of assembly, homotetramer. The cofactor is Zn(2+).

The protein localises to the cytoplasm. The catalysed reaction is 2 D-sedoheptulose 7-phosphate = D-glycero-alpha-D-manno-heptose 7-phosphate + D-glycero-beta-D-manno-heptose 7-phosphate. It participates in carbohydrate biosynthesis; D-glycero-D-manno-heptose 7-phosphate biosynthesis; D-glycero-alpha-D-manno-heptose 7-phosphate and D-glycero-beta-D-manno-heptose 7-phosphate from sedoheptulose 7-phosphate: step 1/1. Its function is as follows. Catalyzes the isomerization of sedoheptulose 7-phosphate in D-glycero-D-manno-heptose 7-phosphate. In Shewanella sediminis (strain HAW-EB3), this protein is Phosphoheptose isomerase.